Reading from the N-terminus, the 480-residue chain is MGYSFDRASKDVVKKLQGRDLRPVECLSDATKFRLFHILQETPRSGWETEDIPVGFTLLDLLEPNFPVPEPEVSAPKPFIHVQSTDLEANLNVADIARGGVGYVGYGGYNIEVQSTSIPNPKLEILQNRKLLDNLPTFMKFCRMERKNLYVVTEAYEVSKDTMLTGLSSVNLSVKGFFKQLFKVRGKAGRSEKYSIPIPKGSVLAYKKQQLVIENNTCVILPSATKKKMTFPGTPKYASASEPTEIYRTELQGLWINDIVPIGRIQEPAHLDFMCLQNEVYKQTEQLAELSKGVQEVVLSSILSMLYEGDRKVLYDLMNMLELNQLGHMDGPGGKILDELRKDSSNPCVDLKDLILYLLQALMVLSDSQLNLLAQSVEMGILPHQVELVKSILQPNFKYPWNIPFTLQPQLLAPLQGEGLAITYELLEECGLKMELNNPRSTWDLEAKMPLSALYGSLSFLQQLRKANSSSKPSLRPGYI.

Positions 1–226 (MGYSFDRASK…TCVILPSATK (226 aa)) are triggers pyroptosis.

The protein belongs to the gasdermin family. As to quaternary structure, homooligomer; homooligomeric ring-shaped pore complex containing 27-28 subunits when inserted in the membrane. In terms of processing, cleavage by CASP8 relieves autoinhibition by releasing the N-terminal moiety (Gasdermin-C2, N-terminal) that initiates pyroptosis. Palmitoylated.

The protein resides in the cytoplasm. It is found in the cytosol. Its subcellular location is the cell membrane. The full-length protein before cleavage is inactive: intramolecular interactions between N- and C-terminal domains mediate autoinhibition in the absence of activation signal. The intrinsic pyroptosis-inducing activity is carried by the released N-terminal moiety (Gasdermin-C2, N-terminal) following cleavage by caspase CASP8 in response to type-2 immunity following worm infection. In terms of biological role, this form constitutes the precursor of the pore-forming protein: upon cleavage, the released N-terminal moiety (Gasdermin-C2, N-terminal) binds to membranes and forms pores, triggering pyroptosis. Functionally, pore-forming protein that causes membrane permeabilization and pyroptosis in response to type-2 immunity. Produced by the cleavage of gasdermin-C2 in response to type-2 immunity following worm infection. After cleavage, moves to the plasma membrane where it strongly binds to membrane inner leaflet lipids. Homooligomerizes within the membrane and forms pores of 10-15 nanometers (nm) of inner diameter, triggering pyroptosis and lytic cell death in enterocytes. The chain is Gasdermin-C2 from Mus musculus (Mouse).